Here is a 216-residue protein sequence, read N- to C-terminus: MRVILLGAPGAGKGTQAKFITEKFGIPQISTGDMLRAAVKAGTELGIKAKSIMDAGGLVSDDLIIALVKDRIAQADCAKGFLFDGFPRTIPQAEALVTAGVELDAVVEIAVEDEEIVQRIAGRRVHEASGRVYHIVYNPPKIAGKDDITGEELVQRKDDTEETVRHRLSVYHSQTKPLVEFYQNLSAKNGGKPKYSHIPGVGSVEAITAKVLEALS.

10-15 (GAGKGT) serves as a coordination point for ATP. The interval 30-59 (STGDMLRAAVKAGTELGIKAKSIMDAGGLV) is NMP. AMP contacts are provided by residues Thr31, Arg36, 57–59 (GLV), 85–88 (GFPR), and Gln92. Residues 122-159 (GRRVHEASGRVYHIVYNPPKIAGKDDITGEELVQRKDD) are LID. ATP contacts are provided by residues Arg123 and 132-133 (VY). Residues Arg156 and Arg167 each coordinate AMP. Residue Gly202 participates in ATP binding.

It belongs to the adenylate kinase family. In terms of assembly, monomer.

Its subcellular location is the cytoplasm. It catalyses the reaction AMP + ATP = 2 ADP. It functions in the pathway purine metabolism; AMP biosynthesis via salvage pathway; AMP from ADP: step 1/1. Catalyzes the reversible transfer of the terminal phosphate group between ATP and AMP. Plays an important role in cellular energy homeostasis and in adenine nucleotide metabolism. The sequence is that of Adenylate kinase from Pseudomonas fluorescens (strain Pf0-1).